A 210-amino-acid polypeptide reads, in one-letter code: Outer-membrane lipoprotein LolB (210 aa).

An N-terminal signal peptide occupies residues 1–29 (MSLISNNEERSLRVRYCIAIALSALLISG). Cys-30 carries N-palmitoyl cysteine lipidation. A lipid anchor (S-diacylglycerol cysteine) is attached at Cys-30.

Belongs to the LolB family. In terms of assembly, monomer.

It localises to the cell outer membrane. Functionally, plays a critical role in the incorporation of lipoproteins in the outer membrane after they are released by the LolA protein. This is Outer-membrane lipoprotein LolB from Coxiella burnetii (strain CbuG_Q212) (Coxiella burnetii (strain Q212)).